The primary structure comprises 335 residues: UPF0353 protein MT1528 (335 aa).

Helical transmembrane passes span 18-38 (WFFL…LMQL) and 67-87 (VPAI…AGPT). The VWFA domain maps to 98–294 (VVMLVIDVSQ…AELRAVYSSL (197 aa)). The chain crosses the membrane as a helical span at residues 309 to 329 (VGWLRLGALALALAALAALLI).

This sequence belongs to the UPF0353 family.

It localises to the cell membrane. The sequence is that of UPF0353 protein MT1528 from Mycobacterium tuberculosis (strain CDC 1551 / Oshkosh).